The following is a 321-amino-acid chain: Glycolipid transfer protein domain-containing protein 2 (321 aa).

Belongs to the GLTP family.

The polypeptide is Glycolipid transfer protein domain-containing protein 2 (Gltpd2) (Mus musculus (Mouse)).